A 509-amino-acid polypeptide reads, in one-letter code: Maturase K (509 aa).

This sequence belongs to the intron maturase 2 family. MatK subfamily.

The protein resides in the plastid. It localises to the chloroplast. Usually encoded in the trnK tRNA gene intron. Probably assists in splicing its own and other chloroplast group II introns. In Nicotiana clevelandii (Wild tobacco), this protein is Maturase K.